The chain runs to 438 residues: MAAGLRKRGQPASVGQPAGIWKQWLQRAWQERYLLLREPRYTLLVASCLCIAEVGITFWVIHRVAYTEIDWKAYMAQVEGFINGTYDYTQLQGDTGPLVYPAGFLYIFTGLFYATDRGTDIPMAQNIFAVLYLVTLVLVFLIYHQTSKVPPFVFFFMCCASYRVHSIFVLRLFNDPVAMALLFLSINLFLAQCWSWGCCCFSLAVSVKMNVLLFAPGLLFLLLTQFGFRGALPKLAICAALQVVLGLPFLLENPIGYLSRSFDLGRQFLFQWTVNWRFLPETIFLHRAFHLALLAAHLSLLLLFALCRWHRTGESILALLKDPSKRKVPPQALTPNQIVSILFTSNFIGICFSRSLHYQFYVWYFHTLPYLLWAMPARWLTHLLRLLVLGLIELSWNTYPSTSFSSAALHLCHAVVLLQLWLSPESFPKSIQPSRKTH.

At serine 13 the chain carries Phosphoserine. 11 helical membrane passes run 41–61 (YTLL…FWVI), 95–115 (TGPL…FYAT), 123–143 (MAQN…FLIY), 149–169 (VPPF…SIFV), 172–192 (LFND…FLAQ), 203–223 (LAVS…FLLL), 231–251 (ALPK…PFLL), 289–309 (FHLA…LCRW), 332–352 (ALTP…GICF), 356–376 (LHYQ…WAMP), and 407–427 (AALH…PESF).

Belongs to the glycosyltransferase ALG3 family.

It localises to the endoplasmic reticulum membrane. It carries out the reaction an alpha-D-Man-(1-&gt;2)-alpha-D-Man-(1-&gt;2)-alpha-D-Man-(1-&gt;3)-[alpha-D-Man-(1-&gt;6)]-beta-D-Man-(1-&gt;4)-beta-D-GlcNAc-(1-&gt;4)-alpha-D-GlcNAc-diphospho-di-trans,poly-cis-dolichol + a di-trans,poly-cis-dolichyl beta-D-mannosyl phosphate = an alpha-D-Man-(1-&gt;2)-alpha-D-Man-(1-&gt;2)-alpha-D-Man-(1-&gt;3)-[alpha-D-Man-(1-&gt;3)-alpha-D-Man-(1-&gt;6)]-beta-D-Man-(1-&gt;4)-beta-D-GlcNAc-(1-&gt;4)-alpha-D-GlcNAc-diphospho-di-trans,poly-cis-dolichol + a di-trans,poly-cis-dolichyl phosphate + H(+). The protein operates within protein modification; protein glycosylation. Functionally, dol-P-Man:Man(5)GlcNAc(2)-PP-Dol alpha-1,3-mannosyltransferase that operates in the biosynthetic pathway of dolichol-linked oligosaccharides, the glycan precursors employed in protein asparagine (N)-glycosylation. The assembly of dolichol-linked oligosaccharides begins on the cytosolic side of the endoplasmic reticulum membrane and finishes in its lumen. The sequential addition of sugars to dolichol pyrophosphate produces dolichol-linked oligosaccharides containing fourteen sugars, including two GlcNAcs, nine mannoses and three glucoses. Once assembled, the oligosaccharide is transferred from the lipid to nascent proteins by oligosaccharyltransferases. In the lumen of the endoplasmic reticulum, adds the first dolichyl beta-D-mannosyl phosphate derived mannose in an alpha-1,3 linkage to Man(5)GlcNAc(2)-PP-dolichol to produce Man(6)GlcNAc(2)-PP-dolichol. Man(6)GlcNAc(2)-PP-dolichol is a substrate for ALG9, the following enzyme in the biosynthetic pathway. The sequence is that of Dol-P-Man:Man(5)GlcNAc(2)-PP-Dol alpha-1,3-mannosyltransferase from Mus musculus (Mouse).